The chain runs to 300 residues: Oxidoreductase BOA1 (300 aa).

It belongs to the NmrA-type oxidoreductase family. Isoflavone reductase subfamily.

It functions in the pathway polyketide biosynthesis. In terms of biological role, oxidoreductase; part of the gene cluster A that mediates the biosynthesis of botcinic acid and its botcinin derivatives, acetate-derived polyketides that contribute to virulence when combined with the sesquiterpene botrydial. Botcinic acid and its derivatives have been shown to induce chlorosis and necrosis during host plant infection, but also have antifungal activities. Two polyketide synthases, BOA6 and BOA9, are involved in the biosynthesis of botcinins. BOA6 mediates the formation of the per-methylated tetraketide core by condensation of four units of malonyl-CoA with one unit of acetyl-CoA, which would be methylated in activated methylene groups to yield a bicyclic acid intermediate that could then either be converted to botrylactone derivatives or lose the starter acetate unit through a retro-Claisen type C-C bond cleavage to yield botcinin derivatives. The second polyketide synthase, BOA9, is probably required for the biosynthesis of the tetraketide side chain of botcinins. The methyltransferase (MT) domain within BOA6 is probably responsible for the incorporation of four methyl groups. The trans-enoyl reductase BOA5 might take over the enoyl reductase function of BOA6 that misses an ER domain. The monooxygenases BOA2, BOA3 and BOA4 might be involved in further hydroxylations at C4, C5 and C8, whereas BOA7, close to BOA9, could potentially be involved in the hydroxylation at C4 in the side chain of botcinins. This is Oxidoreductase BOA1 from Botryotinia fuckeliana (strain B05.10) (Noble rot fungus).